We begin with the raw amino-acid sequence, 82 residues long: Acyl carrier protein (82 aa).

Positions 4–79 (PEMEARLKQI…DALNYIEQKL (76 aa)) constitute a Carrier domain. An O-(pantetheine 4'-phosphoryl)serine modification is found at serine 39.

The protein belongs to the acyl carrier protein (ACP) family. Post-translationally, 4'-phosphopantetheine is transferred from CoA to a specific serine of apo-ACP by AcpS. This modification is essential for activity because fatty acids are bound in thioester linkage to the sulfhydryl of the prosthetic group.

The protein resides in the cytoplasm. It functions in the pathway lipid metabolism; fatty acid biosynthesis. In terms of biological role, carrier of the growing fatty acid chain in fatty acid biosynthesis. The sequence is that of Acyl carrier protein from Roseiflexus castenholzii (strain DSM 13941 / HLO8).